The primary structure comprises 861 residues: Semaphorin-4D (861 aa).

The first 23 residues, 1–23 (MRMCAPVRGLFLALVVVLRTAVA), serve as a signal peptide directing secretion. Residues 24 to 500 (FAPVPRLTWE…SNSGVVQAPL (477 aa)) enclose the Sema domain. The Extracellular portion of the chain corresponds to 24 to 733 (FAPVPRLTWE…TVYLKSSDNR (710 aa)). 2 N-linked (GlcNAc...) asparagine glycosylation sites follow: asparagine 49 and asparagine 77. 2 disulfide bridges follow: cysteine 97–cysteine 108 and cysteine 126–cysteine 135. Asparagine 139 and asparagine 191 each carry an N-linked (GlcNAc...) asparagine glycan. Cystine bridges form between cysteine 257-cysteine 370 and cysteine 281-cysteine 326. N-linked (GlcNAc...) asparagine glycosylation is found at asparagine 379 and asparagine 419. Residues 502-551 (FCEKHGSCEDCVLARDPYCAWSPAIKACVTLHQEEASSRGWIQDMSGDTS) form the PSI domain. 4 disulfides stabilise this stretch: cysteine 503–cysteine 520, cysteine 509–cysteine 553, cysteine 512–cysteine 529, and cysteine 576–cysteine 624. In terms of domain architecture, Ig-like C2-type spans 555–636 (DKSKESFNQH…EERVRNKTVS (82 aa)). N-linked (GlcNAc...) asparagine glycosylation is found at asparagine 613 and asparagine 632. Residues 649–709 (VPRTPPSPTS…KSSSGTSCEP (61 aa)) are disordered. Residues 657 to 681 (TSEDAQTEGSKITSKMPVASTQGSS) show a composition bias toward polar residues. The chain crosses the membrane as a helical span at residues 734-754 (LLMSLLLFIFVLFLCLFSYNC). At 755–861 (YKGYLPGQCL…KFADSDADGD (107 aa)) the chain is on the cytoplasmic side. Serine 782 and serine 832 each carry phosphoserine. Residues 793 to 839 (VEPGSFSQQNGDHPKPALDTGYETEQDTITSKVPTDREDSQRIDELS) are disordered. Residues 826 to 839 (PTDREDSQRIDELS) show a composition bias toward basic and acidic residues.

The protein belongs to the semaphorin family. As to quaternary structure, homodimer. Interacts with PLXNB1. Interacts with PLXNB2. Strongly expressed in lymphoid tissues, especially in the thymus, as well as in the nervous tissues. Expressed in neurons and glia in the developing hippocampus.

It localises to the cell membrane. Functionally, cell surface receptor for PLXNB1 and PLXNB2 that plays an important role in cell-cell signaling. Regulates GABAergic synapse development. Promotes the development of inhibitory synapses in a PLXNB1-dependent manner. Modulates the complexity and arborization of developing neurites in hippocampal neurons by activating PLXNB1 and interaction with PLXNB1 mediates activation of RHOA. Promotes the migration of cerebellar granule cells. Plays a role in the immune system; induces B-cells to aggregate and improves their viability (in vitro). Induces endothelial cell migration through the activation of PTK2B/PYK2, SRC, and the phosphatidylinositol 3-kinase-AKT pathway. The polypeptide is Semaphorin-4D (Sema4d) (Mus musculus (Mouse)).